The primary structure comprises 931 residues: Phosphoenolpyruvate carboxylase (931 aa).

Active-site residues include histidine 138 and lysine 594.

It belongs to the PEPCase type 1 family. The cofactor is Mg(2+).

It catalyses the reaction oxaloacetate + phosphate = phosphoenolpyruvate + hydrogencarbonate. Its function is as follows. Forms oxaloacetate, a four-carbon dicarboxylic acid source for the tricarboxylic acid cycle. This Streptococcus agalactiae serotype Ia (strain ATCC 27591 / A909 / CDC SS700) protein is Phosphoenolpyruvate carboxylase.